An 885-amino-acid chain; its full sequence is Leucine--tRNA ligase (885 aa).

A 'HIGH' region motif is present at residues 48-58; it reads PYPSGKLHMGH. Residues 639–643 carry the 'KMSKS' region motif; that stretch reads TMSKS. Lys642 contacts ATP.

Belongs to the class-I aminoacyl-tRNA synthetase family.

It is found in the cytoplasm. It catalyses the reaction tRNA(Leu) + L-leucine + ATP = L-leucyl-tRNA(Leu) + AMP + diphosphate. This Bordetella bronchiseptica (strain ATCC BAA-588 / NCTC 13252 / RB50) (Alcaligenes bronchisepticus) protein is Leucine--tRNA ligase.